An 83-amino-acid chain; its full sequence is uncharacterized protein (83 aa).

An N-terminal signal peptide occupies residues 1-20; that stretch reads MRRALTLAVLATCAVLPALA.

It to P.denitrificans and M.extorquens MoxJ.

This is an uncharacterized protein from Paracoccus denitrificans.